The primary structure comprises 120 residues: Small ribosomal subunit protein eS24 (120 aa).

The segment at 101-120 is disordered; the sequence is RDAGTKQKKGGSKGGQGAKG.

The protein belongs to the eukaryotic ribosomal protein eS24 family.

The polypeptide is Small ribosomal subunit protein eS24 (Saccharolobus solfataricus (strain ATCC 35092 / DSM 1617 / JCM 11322 / P2) (Sulfolobus solfataricus)).